A 341-amino-acid chain; its full sequence is tRNA N6-adenosine threonylcarbamoyltransferase (341 aa).

Fe cation is bound by residues H111 and H115. Substrate is bound by residues 134–138 (LVSGG), D167, G180, and N276. D304 serves as a coordination point for Fe cation.

This sequence belongs to the KAE1 / TsaD family. It depends on Fe(2+) as a cofactor.

It is found in the cytoplasm. It carries out the reaction L-threonylcarbamoyladenylate + adenosine(37) in tRNA = N(6)-L-threonylcarbamoyladenosine(37) in tRNA + AMP + H(+). In terms of biological role, required for the formation of a threonylcarbamoyl group on adenosine at position 37 (t(6)A37) in tRNAs that read codons beginning with adenine. Is involved in the transfer of the threonylcarbamoyl moiety of threonylcarbamoyl-AMP (TC-AMP) to the N6 group of A37, together with TsaE and TsaB. TsaD likely plays a direct catalytic role in this reaction. This chain is tRNA N6-adenosine threonylcarbamoyltransferase, found in Pseudomonas fluorescens (strain SBW25).